The primary structure comprises 309 residues: Coproporphyrin III ferrochelatase (309 aa).

Fe-coproporphyrin III is bound by residues tyrosine 12, arginine 29, 45–46 (RY), serine 53, and tyrosine 124. Fe(2+)-binding residues include histidine 182 and glutamate 263.

It belongs to the ferrochelatase family.

The protein resides in the cytoplasm. It catalyses the reaction Fe-coproporphyrin III + 2 H(+) = coproporphyrin III + Fe(2+). It participates in porphyrin-containing compound metabolism; protoheme biosynthesis. Involved in coproporphyrin-dependent heme b biosynthesis. Catalyzes the insertion of ferrous iron into coproporphyrin III to form Fe-coproporphyrin III. This chain is Coproporphyrin III ferrochelatase, found in Listeria monocytogenes serotype 4b (strain F2365).